The primary structure comprises 471 residues: Ribulose bisphosphate carboxylase large chain 2 (471 aa).

Substrate is bound by residues Asn116 and Thr166. The active-site Proton acceptor is the Lys168. Lys170 provides a ligand contact to substrate. 3 residues coordinate Mg(2+): Lys194, Asp196, and Glu197. At Lys194 the chain carries N6-carboxylysine. The active-site Proton acceptor is the His287. 3 residues coordinate substrate: Arg288, His320, and Ser372.

Belongs to the RuBisCO large chain family. Type I subfamily. In terms of assembly, heterohexadecamer of 8 large chains and 8 small chains. Forms a CsoS2-CsoS1-RuBisCO complex. Mg(2+) is required as a cofactor.

It localises to the carboxysome. The enzyme catalyses 2 (2R)-3-phosphoglycerate + 2 H(+) = D-ribulose 1,5-bisphosphate + CO2 + H2O. It carries out the reaction D-ribulose 1,5-bisphosphate + O2 = 2-phosphoglycolate + (2R)-3-phosphoglycerate + 2 H(+). In terms of biological role, ruBisCO catalyzes two reactions: the carboxylation of D-ribulose 1,5-bisphosphate, the primary event in carbon dioxide fixation, as well as the oxidative fragmentation of the pentose substrate. Both reactions occur simultaneously and in competition at the same active site. Replacing the endogenous type I ccbLS genes in H.neapolitanus with this carboxysomally targeted enzyme reconstitutes RuBisCO with about 25% of normal activity; the active enzyme is targeted to carboxysomes. The polypeptide is Ribulose bisphosphate carboxylase large chain 2 (Hydrogenovibrio crunogenus (strain DSM 25203 / XCL-2) (Thiomicrospira crunogena)).